A 1407-amino-acid polypeptide reads, in one-letter code: DNA-directed RNA polymerase subunit beta' (1407 aa).

Zn(2+)-binding residues include Cys-70, Cys-72, Cys-85, and Cys-88. Mg(2+) is bound by residues Asp-460, Asp-462, and Asp-464. Cys-814, Cys-888, Cys-895, and Cys-898 together coordinate Zn(2+).

The protein belongs to the RNA polymerase beta' chain family. The RNAP catalytic core consists of 2 alpha, 1 beta, 1 beta' and 1 omega subunit. When a sigma factor is associated with the core the holoenzyme is formed, which can initiate transcription. Mg(2+) is required as a cofactor. Requires Zn(2+) as cofactor.

It catalyses the reaction RNA(n) + a ribonucleoside 5'-triphosphate = RNA(n+1) + diphosphate. Its function is as follows. DNA-dependent RNA polymerase catalyzes the transcription of DNA into RNA using the four ribonucleoside triphosphates as substrates. This is DNA-directed RNA polymerase subunit beta' from Cronobacter sakazakii (strain ATCC BAA-894) (Enterobacter sakazakii).